The chain runs to 469 residues: 3-isopropylmalate dehydratase large subunit (469 aa).

Cys350, Cys410, and Cys413 together coordinate [4Fe-4S] cluster.

It belongs to the aconitase/IPM isomerase family. LeuC type 1 subfamily. As to quaternary structure, heterodimer of LeuC and LeuD. [4Fe-4S] cluster serves as cofactor.

The catalysed reaction is (2R,3S)-3-isopropylmalate = (2S)-2-isopropylmalate. It functions in the pathway amino-acid biosynthesis; L-leucine biosynthesis; L-leucine from 3-methyl-2-oxobutanoate: step 2/4. In terms of biological role, catalyzes the isomerization between 2-isopropylmalate and 3-isopropylmalate, via the formation of 2-isopropylmaleate. The sequence is that of 3-isopropylmalate dehydratase large subunit from Sinorhizobium fredii (strain NBRC 101917 / NGR234).